We begin with the raw amino-acid sequence, 72 residues long: Lantibiotic Flvbeta.e (72 aa).

Positions 1-34 (MNNKEFNMEQFKKLAAVVSEDELDEMLDENVTGA) are cleaved as a propeptide — cleaved by FlvT. The segment at residues 36 to 40 (SSIPC) is a cross-link (lanthionine (Ser-Cys); by FlvM2). Residue Ser37 is modified to 2,3-didehydroalanine (Ser); by FlvM2. Thr48 and Thr49 each carry 2,3-didehydrobutyrine; by FlvM2. Cross-links (beta-methyllanthionine (Thr-Cys); by FlvM2) lie at residues 55 to 61 (TTGFDWC), 63 to 66 (TGAC), and 67 to 70 (TTSC).

In terms of processing, contains LL-lanthionine and DL-beta-methyllanthionine, when coepressed in E.coli with the flavecin synthetase FlvM2.

It localises to the secreted. Lanthionine-containing peptide antibiotic (lantibiotic) that is probably active on Gram-positive bacteria, since its analog [Del1]Flvbeta.e shows antibacterial activity against Gram-positive bacteria. This activity is not synergistically enhanced by [Del2]Flvalpha.a, an analog of Flvalpha.a, which is encoded by the same operon than Flvbeta.e. The bactericidal activity of lantibiotics is based on depolarization of energized bacterial cytoplasmic membranes, initiated by the formation of aqueous transmembrane pores. This Ruminococcus flavefaciens protein is Lantibiotic Flvbeta.e.